Here is a 396-residue protein sequence, read N- to C-terminus: Acetylornithine aminotransferase 2 (396 aa).

Pyridoxal 5'-phosphate is bound by residues 102–103 (GA) and F134. A N(2)-acetyl-L-ornithine-binding site is contributed by R137. 219–222 (DEVQ) serves as a coordination point for pyridoxal 5'-phosphate. The residue at position 248 (K248) is an N6-(pyridoxal phosphate)lysine. T276 serves as a coordination point for pyridoxal 5'-phosphate.

The protein belongs to the class-III pyridoxal-phosphate-dependent aminotransferase family. ArgD subfamily. As to quaternary structure, homodimer. Pyridoxal 5'-phosphate serves as cofactor.

Its subcellular location is the cytoplasm. It carries out the reaction N(2)-acetyl-L-ornithine + 2-oxoglutarate = N-acetyl-L-glutamate 5-semialdehyde + L-glutamate. The protein operates within amino-acid biosynthesis; L-arginine biosynthesis; N(2)-acetyl-L-ornithine from L-glutamate: step 4/4. This is Acetylornithine aminotransferase 2 from Bordetella bronchiseptica (strain ATCC BAA-588 / NCTC 13252 / RB50) (Alcaligenes bronchisepticus).